The sequence spans 338 residues: Ketol-acid reductoisomerase (NADP(+)) (338 aa).

One can recognise a KARI N-terminal Rossmann domain in the interval 1–181 (MKVFYDKDAD…GGGRAGIIET (181 aa)). NADP(+) contacts are provided by residues 24–27 (YGSQ), Arg47, and Ser52. His107 is an active-site residue. Position 133 (Gly133) interacts with NADP(+). Positions 182–327 (NFREETETDL…AKLRAMMPWI (146 aa)) constitute a KARI C-terminal knotted domain. Mg(2+) is bound by residues Asp190, Glu194, Glu226, and Glu230. Ser251 contacts substrate.

It belongs to the ketol-acid reductoisomerase family. Requires Mg(2+) as cofactor.

It catalyses the reaction (2R)-2,3-dihydroxy-3-methylbutanoate + NADP(+) = (2S)-2-acetolactate + NADPH + H(+). It carries out the reaction (2R,3R)-2,3-dihydroxy-3-methylpentanoate + NADP(+) = (S)-2-ethyl-2-hydroxy-3-oxobutanoate + NADPH + H(+). It participates in amino-acid biosynthesis; L-isoleucine biosynthesis; L-isoleucine from 2-oxobutanoate: step 2/4. It functions in the pathway amino-acid biosynthesis; L-valine biosynthesis; L-valine from pyruvate: step 2/4. Involved in the biosynthesis of branched-chain amino acids (BCAA). Catalyzes an alkyl-migration followed by a ketol-acid reduction of (S)-2-acetolactate (S2AL) to yield (R)-2,3-dihydroxy-isovalerate. In the isomerase reaction, S2AL is rearranged via a Mg-dependent methyl migration to produce 3-hydroxy-3-methyl-2-ketobutyrate (HMKB). In the reductase reaction, this 2-ketoacid undergoes a metal-dependent reduction by NADPH to yield (R)-2,3-dihydroxy-isovalerate. This is Ketol-acid reductoisomerase (NADP(+)) from Ralstonia pickettii (strain 12J).